A 292-amino-acid polypeptide reads, in one-letter code: Ribosomal protein L11 methyltransferase (292 aa).

4 residues coordinate S-adenosyl-L-methionine: T143, G164, D186, and N228.

This sequence belongs to the methyltransferase superfamily. PrmA family.

Its subcellular location is the cytoplasm. The enzyme catalyses L-lysyl-[protein] + 3 S-adenosyl-L-methionine = N(6),N(6),N(6)-trimethyl-L-lysyl-[protein] + 3 S-adenosyl-L-homocysteine + 3 H(+). In terms of biological role, methylates ribosomal protein L11. The chain is Ribosomal protein L11 methyltransferase from Tolumonas auensis (strain DSM 9187 / NBRC 110442 / TA 4).